A 257-amino-acid polypeptide reads, in one-letter code: G2/mitotic-specific cyclin S13-7 (257 aa).

Belongs to the cyclin family. Cyclin AB subfamily. Interacts with the CDC2 protein kinase to form a serine/threonine kinase holoenzyme complex also known as maturation promoting factor (MPF). The cyclin subunit imparts substrate specificity to the complex.

In terms of biological role, essential for the control of the cell cycle at the G2/M (mitosis) transition. The protein is G2/mitotic-specific cyclin S13-7 of Glycine max (Soybean).